The primary structure comprises 229 residues: Enolase-phosphatase E1 (229 aa).

The protein belongs to the HAD-like hydrolase superfamily. MasA/MtnC family. As to quaternary structure, monomer. It depends on Mg(2+) as a cofactor.

The enzyme catalyses 5-methylsulfanyl-2,3-dioxopentyl phosphate + H2O = 1,2-dihydroxy-5-(methylsulfanyl)pent-1-en-3-one + phosphate. The protein operates within amino-acid biosynthesis; L-methionine biosynthesis via salvage pathway; L-methionine from S-methyl-5-thio-alpha-D-ribose 1-phosphate: step 3/6. It participates in amino-acid biosynthesis; L-methionine biosynthesis via salvage pathway; L-methionine from S-methyl-5-thio-alpha-D-ribose 1-phosphate: step 4/6. Functionally, bifunctional enzyme that catalyzes the enolization of 2,3-diketo-5-methylthiopentyl-1-phosphate (DK-MTP-1-P) into the intermediate 2-hydroxy-3-keto-5-methylthiopentenyl-1-phosphate (HK-MTPenyl-1-P), which is then dephosphorylated to form the acireductone 1,2-dihydroxy-3-keto-5-methylthiopentene (DHK-MTPene). The chain is Enolase-phosphatase E1 from Erwinia tasmaniensis (strain DSM 17950 / CFBP 7177 / CIP 109463 / NCPPB 4357 / Et1/99).